Here is a 284-residue protein sequence, read N- to C-terminus: Pantothenate synthetase (284 aa).

30–37 (MGNLHDGH) is a binding site for ATP. His-37 acts as the Proton donor in catalysis. Gln-61 provides a ligand contact to (R)-pantoate. Gln-61 contributes to the beta-alanine binding site. Position 149 to 152 (149 to 152 (GEKD)) interacts with ATP. A (R)-pantoate-binding site is contributed by Gln-155. Residues Val-178 and 186 to 189 (LSSR) contribute to the ATP site.

It belongs to the pantothenate synthetase family. As to quaternary structure, homodimer.

It is found in the cytoplasm. The enzyme catalyses (R)-pantoate + beta-alanine + ATP = (R)-pantothenate + AMP + diphosphate + H(+). Its pathway is cofactor biosynthesis; (R)-pantothenate biosynthesis; (R)-pantothenate from (R)-pantoate and beta-alanine: step 1/1. Functionally, catalyzes the condensation of pantoate with beta-alanine in an ATP-dependent reaction via a pantoyl-adenylate intermediate. This is Pantothenate synthetase from Enterobacter sp. (strain 638).